Reading from the N-terminus, the 259-residue chain is Ribosomal RNA small subunit methyltransferase J (259 aa).

S-adenosyl-L-methionine-binding positions include 101–102, 117–118, 153–154, and Asp176; these read RD, ER, and SS.

Belongs to the methyltransferase superfamily. RsmJ family.

Its subcellular location is the cytoplasm. The enzyme catalyses guanosine(1516) in 16S rRNA + S-adenosyl-L-methionine = N(2)-methylguanosine(1516) in 16S rRNA + S-adenosyl-L-homocysteine + H(+). Its function is as follows. Specifically methylates the guanosine in position 1516 of 16S rRNA. In Vibrio campbellii (strain ATCC BAA-1116), this protein is Ribosomal RNA small subunit methyltransferase J.